A 117-amino-acid polypeptide reads, in one-letter code: Large ribosomal subunit protein uL18 (117 aa).

Belongs to the universal ribosomal protein uL18 family. Part of the 50S ribosomal subunit; part of the 5S rRNA/L5/L18/L25 subcomplex. Contacts the 5S and 23S rRNAs.

This is one of the proteins that bind and probably mediate the attachment of the 5S RNA into the large ribosomal subunit, where it forms part of the central protuberance. The sequence is that of Large ribosomal subunit protein uL18 from Neisseria gonorrhoeae (strain ATCC 700825 / FA 1090).